Here is a 172-residue protein sequence, read N- to C-terminus: MAVSNMFVLGAAGINGGDILFQLVMFLILLALLQKFAFGPVMGIMKKREEHIAGEIDEAEKQNEEAKKLVEEQREILKQSRQEVQVMMENARKSAEDKKEEIVAAAREESERLKAAAKQEIEQQKDQAVAALREQVASLSVLIASKVIEKELSEQDQEKLIHEYIQEVGDVR.

Residues 13 to 33 (GINGGDILFQLVMFLILLALL) form a helical membrane-spanning segment.

This sequence belongs to the ATPase B chain family. F-type ATPases have 2 components, F(1) - the catalytic core - and F(0) - the membrane proton channel. F(1) has five subunits: alpha(3), beta(3), gamma(1), delta(1), epsilon(1). F(0) has three main subunits: a(1), b(2) and c(10-14). The alpha and beta chains form an alternating ring which encloses part of the gamma chain. F(1) is attached to F(0) by a central stalk formed by the gamma and epsilon chains, while a peripheral stalk is formed by the delta and b chains.

Its subcellular location is the cell membrane. Its function is as follows. F(1)F(0) ATP synthase produces ATP from ADP in the presence of a proton or sodium gradient. F-type ATPases consist of two structural domains, F(1) containing the extramembraneous catalytic core and F(0) containing the membrane proton channel, linked together by a central stalk and a peripheral stalk. During catalysis, ATP synthesis in the catalytic domain of F(1) is coupled via a rotary mechanism of the central stalk subunits to proton translocation. Component of the F(0) channel, it forms part of the peripheral stalk, linking F(1) to F(0). The polypeptide is ATP synthase subunit b (Priestia megaterium (strain ATCC 12872 / QMB1551) (Bacillus megaterium)).